The sequence spans 2752 residues: Protein PFF0380w (2752 aa).

Over residues 20–30 (EREKEEEEKKR) the composition is skewed to basic and acidic residues. Disordered stretches follow at residues 20–44 (EREK…NNYN), 139–160 (HIHK…NNDY), 634–678 (NDIV…INMK), 1048–1130 (DKKS…SGEN), and 1153–1172 (ENLQ…NNNG). A compositionally biased stretch (low complexity) spans 32–44 (YNISNNNNNNNYN). Over residues 142-157 (KNNDINNIHEKNDKSN) the composition is skewed to basic and acidic residues. A compositionally biased stretch (low complexity) spans 640–674 (NNNNNNNNNNNNNNNNNNNNNNNNNNNNNNNNNNN). The segment covering 1048–1060 (DKKSEDMKEDTPT) has biased composition (basic and acidic residues). Residues 1061–1075 (RGENLQRGQNLQRGD) show a composition bias toward polar residues. Residues 1076–1090 (NLQRGDNLQRGDNLQ) show a composition bias toward basic and acidic residues. Residues 1091–1130 (RGDNLQNGDNLQNGDNLQRGDNLQNGENLQSGENLQSGEN) are compositionally biased toward polar residues. Residues 1162-1172 (NNILYPYNNNG) show a composition bias toward low complexity. The HTH OST-type domain maps to 1277-1354 (TLEEVLEIIS…LHRTHIQHKK (78 aa)). 4 disordered regions span residues 1457–1499 (DIKQ…NNIS), 1958–1999 (AKNS…YYML), 2063–2099 (KRKN…NNDK), and 2501–2537 (DENN…FLHN). 2 stretches are compositionally biased toward low complexity: residues 1469–1499 (NNIN…NNIS) and 1962–1975 (NQEN…NYNN). Positions 1976–1994 (NDDDDDNNNNNNDDDDDDN) are enriched in acidic residues. 2 stretches are compositionally biased toward low complexity: residues 2068–2095 (NIHN…NNDN) and 2501–2526 (DENN…VLHN).

The protein is Protein PFF0380w of Plasmodium falciparum (isolate 3D7).